A 62-amino-acid polypeptide reads, in one-letter code: Cuticle protein 6.4 (62 aa).

Functionally, component of the cuticle of migratory locust which contains more than 100 different structural proteins. This is Cuticle protein 6.4 from Locusta migratoria (Migratory locust).